The following is a 192-amino-acid chain: Transcription antitermination protein NusB (192 aa).

The protein belongs to the NusB family.

Involved in transcription antitermination. Required for transcription of ribosomal RNA (rRNA) genes. Binds specifically to the boxA antiterminator sequence of the ribosomal RNA (rrn) operons. This chain is Transcription antitermination protein NusB, found in Lactococcus lactis subsp. lactis (strain IL1403) (Streptococcus lactis).